The chain runs to 495 residues: Geraniol 8-hydroxylase (495 aa).

A helical membrane pass occupies residues 5–25 (FLTIAIGFLFTITLYQALNFF). Position 438 (Cys438) interacts with heme.

It belongs to the cytochrome P450 family. The cofactor is heme. Expressed in leaves, stems and roots.

It localises to the endoplasmic reticulum membrane. The catalysed reaction is (2E)-geraniol + reduced [NADPH--hemoprotein reductase] + O2 = (6E)-8-hydroxygeraniol + oxidized [NADPH--hemoprotein reductase] + H2O + H(+). Functionally, hydroxylase involved in the biosynthesis of hydroxygeraniol, a precursor of the iridoid monoterpenoid swertiamarin. This Swertia mussotii (Felwort) protein is Geraniol 8-hydroxylase (CYP76B10).